Here is a 142-residue protein sequence, read N- to C-terminus: Galactose-6-phosphate isomerase subunit LacA (142 aa).

The protein belongs to the LacAB/RpiB family. In terms of assembly, heteromultimeric protein consisting of LacA and LacB.

The catalysed reaction is aldehydo-D-galactose 6-phosphate = keto-D-tagatose 6-phosphate. The protein operates within carbohydrate metabolism; D-galactose 6-phosphate degradation; D-tagatose 6-phosphate from D-galactose 6-phosphate: step 1/1. The polypeptide is Galactose-6-phosphate isomerase subunit LacA (Staphylococcus aureus (strain JH9)).